We begin with the raw amino-acid sequence, 459 residues long: Ribulose bisphosphate carboxylase (459 aa).

A substrate-binding site is contributed by Asn111. Catalysis depends on Lys166, which acts as the Proton acceptor. Lys168 provides a ligand contact to substrate. Residues Lys191, Asp193, and Glu194 each coordinate Mg(2+). Lys191 carries the N6-carboxylysine modification. His287 functions as the Proton acceptor in the catalytic mechanism. The substrate site is built by Arg288, His321, and Ser368.

This sequence belongs to the RuBisCO large chain family. Type II subfamily. Homodimer. Mg(2+) serves as cofactor.

Its subcellular location is the cytoplasm. The catalysed reaction is 2 (2R)-3-phosphoglycerate + 2 H(+) = D-ribulose 1,5-bisphosphate + CO2 + H2O. The enzyme catalyses D-ribulose 1,5-bisphosphate + O2 = 2-phosphoglycolate + (2R)-3-phosphoglycerate + 2 H(+). In terms of biological role, ruBisCO catalyzes two reactions: the carboxylation of D-ribulose 1,5-bisphosphate, the primary event in carbon dioxide fixation, as well as the oxidative fragmentation of the pentose substrate. Both reactions occur simultaneously and in competition at the same active site. The protein is Ribulose bisphosphate carboxylase of Halothiobacillus neapolitanus (strain ATCC 23641 / c2) (Thiobacillus neapolitanus).